The chain runs to 72 residues: Metallothionein-like protein type 2 (72 aa).

Belongs to the metallothionein superfamily. Type 15 family.

Functionally, metallothioneins have a high content of cysteine residues that bind various heavy metals. This chain is Metallothionein-like protein type 2, found in Solanum lycopersicum (Tomato).